The chain runs to 59 residues: UPF0181 protein YoaH (59 aa).

Belongs to the UPF0181 family.

The chain is UPF0181 protein YoaH from Salmonella arizonae (strain ATCC BAA-731 / CDC346-86 / RSK2980).